The chain runs to 745 residues: Probable copper-transporting ATPase PacS (745 aa).

The Cytoplasmic segment spans residues 1–94 (MAQTINLQLE…PVFSAKLVTG (94 aa)). In terms of domain architecture, HMA spans 3 to 68 (QTINLQLEGM…AVERAGYHAR (66 aa)). A metal cation is bound by residues Cys-14 and Cys-17. The helical transmembrane segment at 95–115 (LVISAVLFFGSLPMMLGVNIP) threads the bilayer. Residues 116–125 (HFPHIFHDPW) are Extracellular-facing. A helical transmembrane segment spans residues 126–145 (LQWLLATPVQFWSGAEFYRG). Topologically, residues 146-152 (AWKSVRT) are cytoplasmic. A helical transmembrane segment spans residues 153-173 (RSATMDTLVALGTSAAYFYSV). Topologically, residues 174-193 (AITLFPQWLTSQGLAAHVYF) are extracellular. The helical transmembrane segment at 194–214 (EAAAVVITLILLGRSLEQRAR) threads the bilayer. The Cytoplasmic segment spans residues 215-342 (RETSAAIRKL…KAPIQHFVDR (128 aa)). The chain crosses the membrane as a helical span at residues 343–365 (ITHWFVPTVIVVAIAAFCIWWLT). Residues 366–372 (TGNITLA) are Extracellular-facing. A helical membrane pass occupies residues 373 to 390 (VLTLVEVLIIACPCALGL). Residues 391–543 (ATPTSVMVGT…QAQQWEKEQK (153 aa)) are Cytoplasmic-facing. The active-site 4-aspartylphosphate intermediate is the Asp-428. Residues 544–564 (TVIWLAVDTEVKALLAIADAI) form a helical membrane-spanning segment. Residues 565 to 687 (KPSSPQVVQA…KLSRATMGNI (123 aa)) are Extracellular-facing. 2 residues coordinate Mg(2+): Asp-633 and Asp-637. The chain crosses the membrane as a helical span at residues 688-707 (RQNLFFAFIYNVIGIPVAAG). Residues 708–719 (LFYPLFGLLLNP) lie on the Cytoplasmic side of the membrane. Residues 720-738 (ILAGAAMAFSSVSVVTNAL) form a helical membrane-spanning segment. Topologically, residues 739-745 (RLKKFCP) are extracellular.

This sequence belongs to the cation transport ATPase (P-type) (TC 3.A.3) family. Type IB subfamily.

It is found in the cell membrane. It carries out the reaction Cu(+)(in) + ATP + H2O = Cu(+)(out) + ADP + phosphate + H(+). Functionally, may play a role in the osmotic adaptation. In Synechocystis sp. (strain ATCC 27184 / PCC 6803 / Kazusa), this protein is Probable copper-transporting ATPase PacS (pacS).